The primary structure comprises 571 residues: Proline--tRNA ligase (571 aa).

It belongs to the class-II aminoacyl-tRNA synthetase family. ProS type 1 subfamily. In terms of assembly, homodimer.

It is found in the cytoplasm. It catalyses the reaction tRNA(Pro) + L-proline + ATP = L-prolyl-tRNA(Pro) + AMP + diphosphate. Functionally, catalyzes the attachment of proline to tRNA(Pro) in a two-step reaction: proline is first activated by ATP to form Pro-AMP and then transferred to the acceptor end of tRNA(Pro). As ProRS can inadvertently accommodate and process non-cognate amino acids such as alanine and cysteine, to avoid such errors it has two additional distinct editing activities against alanine. One activity is designated as 'pretransfer' editing and involves the tRNA(Pro)-independent hydrolysis of activated Ala-AMP. The other activity is designated 'posttransfer' editing and involves deacylation of mischarged Ala-tRNA(Pro). The misacylated Cys-tRNA(Pro) is not edited by ProRS. The sequence is that of Proline--tRNA ligase from Shewanella frigidimarina (strain NCIMB 400).